Reading from the N-terminus, the 382-residue chain is Dual-specificity RNA methyltransferase RlmN (382 aa).

The Proton acceptor role is filled by glutamate 94. The Radical SAM core domain occupies 100 to 336 (EANRGTLCVS…NTITRKTRGD (237 aa)). Cysteines 107 and 342 form a disulfide. [4Fe-4S] cluster-binding residues include cysteine 114, cysteine 118, and cysteine 121. S-adenosyl-L-methionine contacts are provided by residues 168 to 169 (GE), serine 200, 222 to 224 (SLH), and asparagine 299. The S-methylcysteine intermediate role is filled by cysteine 342.

It belongs to the radical SAM superfamily. RlmN family. [4Fe-4S] cluster serves as cofactor.

Its subcellular location is the cytoplasm. It carries out the reaction adenosine(2503) in 23S rRNA + 2 reduced [2Fe-2S]-[ferredoxin] + 2 S-adenosyl-L-methionine = 2-methyladenosine(2503) in 23S rRNA + 5'-deoxyadenosine + L-methionine + 2 oxidized [2Fe-2S]-[ferredoxin] + S-adenosyl-L-homocysteine. The catalysed reaction is adenosine(37) in tRNA + 2 reduced [2Fe-2S]-[ferredoxin] + 2 S-adenosyl-L-methionine = 2-methyladenosine(37) in tRNA + 5'-deoxyadenosine + L-methionine + 2 oxidized [2Fe-2S]-[ferredoxin] + S-adenosyl-L-homocysteine. Its function is as follows. Specifically methylates position 2 of adenine 2503 in 23S rRNA and position 2 of adenine 37 in tRNAs. m2A2503 modification seems to play a crucial role in the proofreading step occurring at the peptidyl transferase center and thus would serve to optimize ribosomal fidelity. This Legionella pneumophila subsp. pneumophila (strain Philadelphia 1 / ATCC 33152 / DSM 7513) protein is Dual-specificity RNA methyltransferase RlmN.